Consider the following 1132-residue polypeptide: DNA topoisomerase 2 (1132 aa).

Residues N68, N100, 137–139 (SSN), and 150–157 (GKNGLGVK) contribute to the ATP site. The tract at residues 327-329 (NKP) is interaction with DNA. 363-365 (QNK) lines the ATP pocket. A Toprim domain is found at 442-577 (CTLIVCEGLS…NLKDFPFISS (136 aa)). Positions 448, 538, and 540 each coordinate Mg(2+). The 413-residue stretch at 713–1125 (LPHLIDGLKE…NEGQMWLKDI (413 aa)) folds into the Topo IIA-type catalytic domain. Y803 acts as the O-(5'-phospho-DNA)-tyrosine intermediate in catalysis. Residues 979–988 (KLRSYIHTSN) form an interaction with DNA region.

The protein belongs to the type II topoisomerase family. Mg(2+) is required as a cofactor. Requires Mn(2+) as cofactor. The cofactor is Ca(2+).

It catalyses the reaction ATP-dependent breakage, passage and rejoining of double-stranded DNA.. Its function is as follows. Can introduce negative superhelical turns into double-stranded circular DNA. This is DNA topoisomerase 2 (TOP2) from Acheta domesticus (House cricket).